The following is a 480-amino-acid chain: Protein nucleotidyltransferase YdiU (480 aa).

Residues Gly-86, Gly-88, Arg-89, Lys-109, Asp-121, Gly-122, Arg-172, and Arg-179 each contribute to the ATP site. Asp-248 functions as the Proton acceptor in the catalytic mechanism. Mg(2+)-binding residues include Asn-249 and Asp-258. Position 258 (Asp-258) interacts with ATP.

This sequence belongs to the SELO family. It depends on Mg(2+) as a cofactor. Mn(2+) is required as a cofactor.

It catalyses the reaction L-seryl-[protein] + ATP = 3-O-(5'-adenylyl)-L-seryl-[protein] + diphosphate. The enzyme catalyses L-threonyl-[protein] + ATP = 3-O-(5'-adenylyl)-L-threonyl-[protein] + diphosphate. The catalysed reaction is L-tyrosyl-[protein] + ATP = O-(5'-adenylyl)-L-tyrosyl-[protein] + diphosphate. It carries out the reaction L-histidyl-[protein] + UTP = N(tele)-(5'-uridylyl)-L-histidyl-[protein] + diphosphate. It catalyses the reaction L-seryl-[protein] + UTP = O-(5'-uridylyl)-L-seryl-[protein] + diphosphate. The enzyme catalyses L-tyrosyl-[protein] + UTP = O-(5'-uridylyl)-L-tyrosyl-[protein] + diphosphate. In terms of biological role, nucleotidyltransferase involved in the post-translational modification of proteins. It can catalyze the addition of adenosine monophosphate (AMP) or uridine monophosphate (UMP) to a protein, resulting in modifications known as AMPylation and UMPylation. The protein is Protein nucleotidyltransferase YdiU of Salmonella newport (strain SL254).